Consider the following 131-residue polypeptide: Modulator protein MzrA (131 aa).

Topologically, residues M1–K14 are cytoplasmic. A helical transmembrane segment spans residues V15–Q31. Residues S32–G131 lie on the Periplasmic side of the membrane.

It belongs to the MzrA family. Interacts with EnvZ.

The protein resides in the cell inner membrane. Modulates the activity of the EnvZ/OmpR two-component regulatory system, probably by directly modulating EnvZ enzymatic activity and increasing stability of phosphorylated OmpR. In Pectobacterium carotovorum subsp. carotovorum (strain PC1), this protein is Modulator protein MzrA.